The following is a 490-amino-acid chain: Aspartyl/glutamyl-tRNA(Asn/Gln) amidotransferase subunit B (490 aa).

It belongs to the GatB/GatE family. GatB subfamily. As to quaternary structure, heterotrimer of A, B and C subunits.

The enzyme catalyses L-glutamyl-tRNA(Gln) + L-glutamine + ATP + H2O = L-glutaminyl-tRNA(Gln) + L-glutamate + ADP + phosphate + H(+). It carries out the reaction L-aspartyl-tRNA(Asn) + L-glutamine + ATP + H2O = L-asparaginyl-tRNA(Asn) + L-glutamate + ADP + phosphate + 2 H(+). Allows the formation of correctly charged Asn-tRNA(Asn) or Gln-tRNA(Gln) through the transamidation of misacylated Asp-tRNA(Asn) or Glu-tRNA(Gln) in organisms which lack either or both of asparaginyl-tRNA or glutaminyl-tRNA synthetases. The reaction takes place in the presence of glutamine and ATP through an activated phospho-Asp-tRNA(Asn) or phospho-Glu-tRNA(Gln). This is Aspartyl/glutamyl-tRNA(Asn/Gln) amidotransferase subunit B from Methylobacterium radiotolerans (strain ATCC 27329 / DSM 1819 / JCM 2831 / NBRC 15690 / NCIMB 10815 / 0-1).